Here is a 180-residue protein sequence, read N- to C-terminus: Peptidyl-tRNA hydrolase (180 aa).

Residue tyrosine 13 coordinates tRNA. Residue histidine 18 is the Proton acceptor of the active site. 3 residues coordinate tRNA: tyrosine 58, asparagine 60, and asparagine 100.

The protein belongs to the PTH family. In terms of assembly, monomer.

It is found in the cytoplasm. The catalysed reaction is an N-acyl-L-alpha-aminoacyl-tRNA + H2O = an N-acyl-L-amino acid + a tRNA + H(+). Hydrolyzes ribosome-free peptidyl-tRNAs (with 1 or more amino acids incorporated), which drop off the ribosome during protein synthesis, or as a result of ribosome stalling. In terms of biological role, catalyzes the release of premature peptidyl moieties from peptidyl-tRNA molecules trapped in stalled 50S ribosomal subunits, and thus maintains levels of free tRNAs and 50S ribosomes. This Fervidobacterium nodosum (strain ATCC 35602 / DSM 5306 / Rt17-B1) protein is Peptidyl-tRNA hydrolase.